A 68-amino-acid polypeptide reads, in one-letter code: Lipopolysaccharide export system ATP-binding protein LptB (68 aa).

The protein belongs to the ABC transporter superfamily. Outer membrane lipopolysaccharide export (TC 1.B.42) family. In terms of assembly, component of the lipopolysaccharide transport and assembly complex. The LptBFG transporter is composed of two ATP-binding proteins (LptB) and two transmembrane proteins (LptF and LptG).

The protein localises to the cytoplasm. It localises to the cell inner membrane. In terms of biological role, part of the ABC transporter complex LptBFG involved in the translocation of lipopolysaccharide (LPS) from the inner membrane to the outer membrane. Probably responsible for energy coupling to the transport system. The protein is Lipopolysaccharide export system ATP-binding protein LptB (lptB) of Klebsiella oxytoca.